The following is a 101-amino-acid chain: Small ribosomal subunit protein uS14 (101 aa).

This sequence belongs to the universal ribosomal protein uS14 family. Part of the 30S ribosomal subunit. Contacts proteins S3 and S10.

In terms of biological role, binds 16S rRNA, required for the assembly of 30S particles and may also be responsible for determining the conformation of the 16S rRNA at the A site. This is Small ribosomal subunit protein uS14 from Roseobacter denitrificans (strain ATCC 33942 / OCh 114) (Erythrobacter sp. (strain OCh 114)).